The primary structure comprises 598 residues: MKNIRNFCIIAHIDHGKSTLADRLLDFTGAVTEREKQEQLLDSMDLERERGITIKSHAIQMDYVHEGEEFVLNLIDTPGHVDFSYEVSRSIAACEGALLVVDAAQSIQAQTISNLYLALENDLEIIPVLNKVDLPSANPEEVTDDIVDLLGCDPSEVIPASAKTGLGIKEILDAIINRVPAPSGKVDAPLRALIFDSVYNPFRGVETYFRVINGSIKKGEKIKFVATGKTYDADEVGTLRLKQFPRKEIKTGDVGYLITGIKDAREVKVGDTITSAVNPTTEAVAGFEDVKPMVFAGIYPVDTEDYEDLRSSMEKLQLNDASLVFLPESSAALGFGFRCGFLGMLHLEIIQERLEREFDMTVITTVPNVSYHAYTNKNPDDVILVNNPSDLPEPSSLNRVEEPFIKATIITKADYVGNVMGLCIEKRGEITNQTYLTTERVELTFDMPLAEIVFDFYDRLKTVSRGYASFDYTPIGLRESKLVKVDVLLNANIVDALSALLHVDNAYDIGKKMCEKLKELIPRQQFDIPIQAAIGAKIIARETVKALRKDVTAKCYGGDISRKRKLLEKQKKGKKRMRQVGNVEIPQEAFMAVLKLND.

The region spanning 2–183 is the tr-type G domain; that stretch reads KNIRNFCIIA…AIINRVPAPS (182 aa). Residues 14 to 19 and 130 to 133 each bind GTP; these read DHGKST and NKVD.

It belongs to the TRAFAC class translation factor GTPase superfamily. Classic translation factor GTPase family. LepA subfamily.

It localises to the cell inner membrane. The catalysed reaction is GTP + H2O = GDP + phosphate + H(+). Its function is as follows. Required for accurate and efficient protein synthesis under certain stress conditions. May act as a fidelity factor of the translation reaction, by catalyzing a one-codon backward translocation of tRNAs on improperly translocated ribosomes. Back-translocation proceeds from a post-translocation (POST) complex to a pre-translocation (PRE) complex, thus giving elongation factor G a second chance to translocate the tRNAs correctly. Binds to ribosomes in a GTP-dependent manner. In Christiangramia forsetii (strain DSM 17595 / CGMCC 1.15422 / KT0803) (Gramella forsetii), this protein is Elongation factor 4.